We begin with the raw amino-acid sequence, 688 residues long: MRAAEERKGVVPAARRRDQFPVGMRVLAVDDDPVCLKVLETLLLRCQYHVTTTNQAAIALKMLRENRDMFDLVISDVHMPDMDGFKLLELVGLEMDLPVIMLSVNGETKTVLKGITHGACDYLLKPVRIEELRNIWQHVIRRKFSTRDRANLDFYEECNKPPNADSDHVHGHVTCGSPDQSGRPSKKRKEYCSEEEDEGEVNTQDIDDPSAPKKPRVVWSVELHRKFVAAVNQLGIDKAVPKRILELMNVEKLTRENVASHLQKYRLYLKRLSAVASQQVSIVAALGGRDPFLHMGGFEGLQGYQAFTSSAALSSFTPHGLLNSPRNNPAALGTQGVPASKSIQTMSGSHTLSHSINDANKYHLSLPGNQKGNLGQGLAASLGQTQMQQKWIHEETDDLSTILSGNGLSNGMSGTLQSVTSSPLLPQELAECTQAKIVSQPSIRTSSVSSEHIEGAVGVSSGLLESRVSQQSTIPLSGFSANGLLIHGSFNNTCANKLGGTSSSCAPARSSNDLMVARDTKGGASSFGGAMLLPPDTEQKYLNFGGGNGLKQKFDDRTADSLFDPKFVWSSVPSSQLASNIGAHHAMSQRWNNSSSNSSNIGARMIGQATSSGSTVIPQMKTDFLVSGDMAMPKNASDLSIPKLQSELSSSSCSFDGLLNSIVKVEKDDVTFSDDLGCGDFYSLGACI.

The region spanning 25–140 (RVLAVDDDPV…ELRNIWQHVI (116 aa)) is the Response regulatory domain. Aspartate 76 bears the 4-aspartylphosphate mark. Positions 161–212 (PPNADSDHVHGHVTCGSPDQSGRPSKKRKEYCSEEEDEGEVNTQDIDDPSAP) are disordered. The span at 193–208 (SEEEDEGEVNTQDIDD) shows a compositional bias: acidic residues. Positions 211–270 (APKKPRVVWSVELHRKFVAAVNQLGIDKAVPKRILELMNVEKLTRENVASHLQKYRLYLK) form a DNA-binding region, myb-like GARP.

The protein belongs to the ARR family. Type-B subfamily. Two-component system major event consists of a His-to-Asp phosphorelay between a sensor histidine kinase (HK) and a response regulator (RR). In plants, the His-to-Asp phosphorelay involves an additional intermediate named Histidine-containing phosphotransfer protein (HPt). This multistep phosphorelay consists of a His-Asp-His-Asp sequential transfer of a phosphate group between first a His and an Asp of the HK protein, followed by the transfer to a conserved His of the HPt protein and finally the transfer to an Asp in the receiver domain of the RR protein.

It localises to the nucleus. Its function is as follows. Transcriptional activator that binds specific DNA sequence. Functions as a response regulator involved in His-to-Asp phosphorelay signal transduction system. Phosphorylation of the Asp residue in the receiver domain activates the ability of the protein to promote the transcription of target genes. May directly activate some type-A response regulators in response to cytokinins. This is Two-component response regulator ORR23 from Oryza sativa subsp. indica (Rice).